Reading from the N-terminus, the 516-residue chain is Cytochrome P450 1A2 (516 aa).

An O-linked (GlcNAc) serine glycan is attached at serine 69. Residues phenylalanine 226 and 361–365 (DRPQL) contribute to the substrate site. A heme-binding site is contributed by cysteine 458.

Belongs to the cytochrome P450 family. As to quaternary structure, interacts with PGRMC1; the interaction requires PGRMC1 homodimerization. Heme is required as a cofactor.

Its subcellular location is the endoplasmic reticulum membrane. The protein localises to the microsome membrane. The enzyme catalyses an organic molecule + reduced [NADPH--hemoprotein reductase] + O2 = an alcohol + oxidized [NADPH--hemoprotein reductase] + H2O + H(+). It catalyses the reaction 17beta-estradiol + reduced [NADPH--hemoprotein reductase] + O2 = 2-hydroxy-17beta-estradiol + oxidized [NADPH--hemoprotein reductase] + H2O + H(+). The catalysed reaction is 17beta-estradiol + reduced [NADPH--hemoprotein reductase] + O2 = 4-hydroxy-17beta-estradiol + oxidized [NADPH--hemoprotein reductase] + H2O + H(+). It carries out the reaction estrone + reduced [NADPH--hemoprotein reductase] + O2 = 2-hydroxyestrone + oxidized [NADPH--hemoprotein reductase] + H2O + H(+). The enzyme catalyses estrone + reduced [NADPH--hemoprotein reductase] + O2 = 4-hydroxyestrone + oxidized [NADPH--hemoprotein reductase] + H2O + H(+). It catalyses the reaction cholesterol + reduced [NADPH--hemoprotein reductase] + O2 = 25-hydroxycholesterol + oxidized [NADPH--hemoprotein reductase] + H2O + H(+). The catalysed reaction is all-trans-retinol + reduced [NADPH--hemoprotein reductase] + O2 = all-trans-retinal + oxidized [NADPH--hemoprotein reductase] + 2 H2O + H(+). It carries out the reaction all-trans-retinal + reduced [NADPH--hemoprotein reductase] + O2 = all-trans-retinoate + oxidized [NADPH--hemoprotein reductase] + H2O + 2 H(+). The enzyme catalyses (5Z,8Z,11Z,14Z)-eicosatetraenoate + reduced [NADPH--hemoprotein reductase] + O2 = (14R,15S)-epoxy-(5Z,8Z,11Z)-eicosatrienoate + oxidized [NADPH--hemoprotein reductase] + H2O + H(+). It catalyses the reaction (5Z,8Z,11Z,14Z)-eicosatetraenoate + reduced [NADPH--hemoprotein reductase] + O2 = (14S,15R)-epoxy-(5Z,8Z,11Z)-eicosatrienoate + oxidized [NADPH--hemoprotein reductase] + H2O + H(+). The catalysed reaction is (5Z,8Z,11Z,14Z,17Z)-eicosapentaenoate + reduced [NADPH--hemoprotein reductase] + O2 = (17R,18S)-epoxy-(5Z,8Z,11Z,14Z)-eicosatetraenoate + oxidized [NADPH--hemoprotein reductase] + H2O + H(+). It carries out the reaction (4Z,7Z,10Z,13Z,16Z,19Z)-docosahexaenoate + reduced [NADPH--hemoprotein reductase] + O2 = (19R,20S)-epoxy-(4Z,7Z,10Z,13Z,16Z)-docosapentaenoate + oxidized [NADPH--hemoprotein reductase] + H2O + H(+). The enzyme catalyses (5S)-hydroperoxy-(6E,8Z,11Z,14Z)-eicosatetraenoate = 5-oxo-(6E,8Z,11Z,14Z)-eicosatetraenoate + H2O. It catalyses the reaction (12S)-hydroperoxy-(5Z,8Z,10E,14Z)-eicosatetraenoate = 12-oxo-(5Z,8Z,10E,14Z)-eicosatetraenoate + H2O. The catalysed reaction is (15S)-hydroperoxy-(5Z,8Z,11Z,13E)-eicosatetraenoate = 15-oxo-(5Z,8Z,11Z,13E)-eicosatetraenoate + H2O. It carries out the reaction (13S)-hydroperoxy-(9Z,11E)-octadecadienoate = 13-oxo-(9Z,11E)-octadecadienoate + H2O. The enzyme catalyses (5Z,8Z,11Z,14Z)-eicosatetraenoate + reduced [NADPH--hemoprotein reductase] + O2 = 13-hydroxy-(5Z,8Z,11Z,14Z)-eicosatetraenoate + oxidized [NADPH--hemoprotein reductase] + H2O + H(+). It catalyses the reaction (5Z,8Z,11Z,14Z)-eicosatetraenoate + reduced [NADPH--hemoprotein reductase] + O2 = 19-hydroxy-(5Z,8Z,11Z,14Z)-eicosatetraenoate + oxidized [NADPH--hemoprotein reductase] + H2O + H(+). The catalysed reaction is (9Z,12Z)-octadecadienoate + reduced [NADPH--hemoprotein reductase] + O2 = 11-hydroxy-(9Z,12Z)-octadecadienoate + oxidized [NADPH--hemoprotein reductase] + H2O + H(+). Its pathway is cofactor metabolism; retinol metabolism. It functions in the pathway steroid metabolism; cholesterol metabolism. The protein operates within lipid metabolism; arachidonate metabolism. Its function is as follows. A cytochrome P450 monooxygenase involved in the metabolism of various endogenous substrates, including fatty acids, steroid hormones and vitamins. Mechanistically, uses molecular oxygen inserting one oxygen atom into a substrate, and reducing the second into a water molecule, with two electrons provided by NADPH via cytochrome P450 reductase (NADPH--hemoprotein reductase). Catalyzes the hydroxylation of carbon-hydrogen bonds. Exhibits high catalytic activity for the formation of hydroxyestrogens from estrone (E1) and 17beta-estradiol (E2), namely 2-hydroxy E1 and E2. Metabolizes cholesterol toward 25-hydroxycholesterol, a physiological regulator of cellular cholesterol homeostasis. May act as a major enzyme for all-trans retinoic acid biosynthesis in the liver. Catalyzes two successive oxidative transformation of all-trans retinol to all-trans retinal and then to the active form all-trans retinoic acid. Primarily catalyzes stereoselective epoxidation of the last double bond of polyunsaturated fatty acids (PUFA), displaying a strong preference for the (R,S) stereoisomer. Catalyzes bisallylic hydroxylation and omega-1 hydroxylation of PUFA. May also participate in eicosanoids metabolism by converting hydroperoxide species into oxo metabolites (lipoxygenase-like reaction, NADPH-independent). Plays a role in the oxidative metabolism of xenobiotics. Catalyzes the N-hydroxylation of heterocyclic amines and the O-deethylation of phenacetin. Metabolizes caffeine via N3-demethylation. In Oryctolagus cuniculus (Rabbit), this protein is Cytochrome P450 1A2 (CYP1A2).